The chain runs to 1013 residues: 2-oxoglutarate dehydrogenase, mitochondrial (1013 aa).

Residues 1–39 (MFTLKQVINKSIQTSMKNGVMSSAVKRSFSTVGGINQPK) constitute a mitochondrion transit peptide. R302, D403, N436, I438, and Q664 together coordinate thiamine diphosphate. D403, N436, and I438 together coordinate Mg(2+).

Belongs to the alpha-ketoglutarate dehydrogenase family. Homodimer. Component of the 2-oxoglutarate dehydrogenase complex. Thiamine diphosphate serves as cofactor. Mg(2+) is required as a cofactor.

The protein localises to the mitochondrion matrix. The catalysed reaction is N(6)-[(R)-lipoyl]-L-lysyl-[protein] + 2-oxoglutarate + H(+) = N(6)-[(R)-S(8)-succinyldihydrolipoyl]-L-lysyl-[protein] + CO2. The 2-oxoglutarate dehydrogenase complex catalyzes the overall conversion of 2-oxoglutarate to succinyl-CoA and CO(2). It contains multiple copies of three enzymatic components: 2-oxoglutarate dehydrogenase (E1), dihydrolipoamide succinyltransferase (E2) and lipoamide dehydrogenase (E3). The sequence is that of 2-oxoglutarate dehydrogenase, mitochondrial (ogdh) from Dictyostelium discoideum (Social amoeba).